Consider the following 155-residue polypeptide: 2-C-methyl-D-erythritol 2,4-cyclodiphosphate synthase (155 aa).

Residues Asp-8 and His-10 each contribute to the a divalent metal cation site. 4-CDP-2-C-methyl-D-erythritol 2-phosphate-binding positions include 8 to 10 (DVH) and 34 to 35 (HS). Residue His-42 participates in a divalent metal cation binding. 4-CDP-2-C-methyl-D-erythritol 2-phosphate-binding positions include 56–58 (DIG), 61–65 (FPDSD), 100–106 (AQKPKML), 132–135 (TTEE), Phe-139, and Lys-142.

Belongs to the IspF family. In terms of assembly, homotrimer. A divalent metal cation is required as a cofactor.

It catalyses the reaction 4-CDP-2-C-methyl-D-erythritol 2-phosphate = 2-C-methyl-D-erythritol 2,4-cyclic diphosphate + CMP. It participates in isoprenoid biosynthesis; isopentenyl diphosphate biosynthesis via DXP pathway; isopentenyl diphosphate from 1-deoxy-D-xylulose 5-phosphate: step 4/6. Involved in the biosynthesis of isopentenyl diphosphate (IPP) and dimethylallyl diphosphate (DMAPP), two major building blocks of isoprenoid compounds. Catalyzes the conversion of 4-diphosphocytidyl-2-C-methyl-D-erythritol 2-phosphate (CDP-ME2P) to 2-C-methyl-D-erythritol 2,4-cyclodiphosphate (ME-CPP) with a corresponding release of cytidine 5-monophosphate (CMP). The polypeptide is 2-C-methyl-D-erythritol 2,4-cyclodiphosphate synthase (Clostridium botulinum (strain Kyoto / Type A2)).